The sequence spans 234 residues: MKAVCVLSGGLDSAVCMAMAKSEGLELYSITFDYGQRAVKKEIIASKKLSELFGAVHKVVELPFVKDFSSSALTKKEEEVPTIKNSELDNLEKATETMEKVWVPARNMILFSISSGFAEFVDAKYIYTGLNVEEGATFPDNTEEFLNRFNSVLEYGTLNKVKMKSPLYKYSKKEIVKIGKKLEEKLNVEFLKYSYSCYHDNKTDFLHCGTCESCMRRKRAFKEAGVEDPTEYIL.

ATP is bound at residue 7-17 (LSGGLDSAVCM). Zn(2+)-binding residues include Cys197, Cys208, Cys211, and Cys214.

This sequence belongs to the QueC family. It depends on Zn(2+) as a cofactor.

The enzyme catalyses 7-carboxy-7-deazaguanine + NH4(+) + ATP = 7-cyano-7-deazaguanine + ADP + phosphate + H2O + H(+). It functions in the pathway purine metabolism; 7-cyano-7-deazaguanine biosynthesis. Catalyzes the ATP-dependent conversion of 7-carboxy-7-deazaguanine (CDG) to 7-cyano-7-deazaguanine (preQ(0)). This chain is 7-cyano-7-deazaguanine synthase, found in Methanococcus aeolicus (strain ATCC BAA-1280 / DSM 17508 / OCM 812 / Nankai-3).